The primary structure comprises 828 residues: Putative dual specificity tyrosine-phosphorylation-regulated kinase 3 homolog (828 aa).

The span at 1–14 (MVGSQEKKNNHIEL) shows a compositional bias: basic and acidic residues. The interval 1 to 26 (MVGSQEKKNNHIELSETPATDKNNLN) is disordered. The span at 17–26 (TPATDKNNLN) shows a compositional bias: polar residues. The Protein kinase domain maps to 276 to 589 (YEMLKIIGKG…PSEALKHPWL (314 aa)). ATP contacts are provided by residues 282 to 290 (IGKGSFGQV) and K305. D402 functions as the Proton acceptor in the catalytic mechanism. Phosphoserine is present on S616.

Belongs to the protein kinase superfamily. CMGC Ser/Thr protein kinase family. MNB/DYRK subfamily. In terms of processing, autophosphorylated on tyrosine residues.

It catalyses the reaction L-seryl-[protein] + ATP = O-phospho-L-seryl-[protein] + ADP + H(+). It carries out the reaction L-threonyl-[protein] + ATP = O-phospho-L-threonyl-[protein] + ADP + H(+). The enzyme catalyses L-tyrosyl-[protein] + ATP = O-phospho-L-tyrosyl-[protein] + ADP + H(+). This is Putative dual specificity tyrosine-phosphorylation-regulated kinase 3 homolog (Dyrk3) from Drosophila melanogaster (Fruit fly).